The chain runs to 105 residues: Nitrogenase-stabilizing/protective protein NifW 1 (105 aa).

It belongs to the NifW family. Homotrimer; associates with NifD.

In terms of biological role, may protect the nitrogenase Fe-Mo protein from oxidative damage. The chain is Nitrogenase-stabilizing/protective protein NifW 1 from Trichormus variabilis (strain ATCC 29413 / PCC 7937) (Anabaena variabilis).